A 371-amino-acid chain; its full sequence is 4-hydroxy-3-methylbut-2-en-1-yl diphosphate synthase (flavodoxin) (371 aa).

[4Fe-4S] cluster is bound by residues Cys-270, Cys-273, Cys-305, and Glu-312.

It belongs to the IspG family. It depends on [4Fe-4S] cluster as a cofactor.

The enzyme catalyses (2E)-4-hydroxy-3-methylbut-2-enyl diphosphate + oxidized [flavodoxin] + H2O + 2 H(+) = 2-C-methyl-D-erythritol 2,4-cyclic diphosphate + reduced [flavodoxin]. Its pathway is isoprenoid biosynthesis; isopentenyl diphosphate biosynthesis via DXP pathway; isopentenyl diphosphate from 1-deoxy-D-xylulose 5-phosphate: step 5/6. Converts 2C-methyl-D-erythritol 2,4-cyclodiphosphate (ME-2,4cPP) into 1-hydroxy-2-methyl-2-(E)-butenyl 4-diphosphate. The chain is 4-hydroxy-3-methylbut-2-en-1-yl diphosphate synthase (flavodoxin) from Shewanella frigidimarina (strain NCIMB 400).